The primary structure comprises 256 residues: Thiazole synthase (256 aa).

Catalysis depends on Lys-95, which acts as the Schiff-base intermediate with DXP. 1-deoxy-D-xylulose 5-phosphate is bound by residues Gly-156, 182-183 (AG), and 204-205 (NT).

Belongs to the ThiG family. As to quaternary structure, homotetramer. Forms heterodimers with either ThiH or ThiS.

Its subcellular location is the cytoplasm. The catalysed reaction is [ThiS sulfur-carrier protein]-C-terminal-Gly-aminoethanethioate + 2-iminoacetate + 1-deoxy-D-xylulose 5-phosphate = [ThiS sulfur-carrier protein]-C-terminal Gly-Gly + 2-[(2R,5Z)-2-carboxy-4-methylthiazol-5(2H)-ylidene]ethyl phosphate + 2 H2O + H(+). It functions in the pathway cofactor biosynthesis; thiamine diphosphate biosynthesis. In terms of biological role, catalyzes the rearrangement of 1-deoxy-D-xylulose 5-phosphate (DXP) to produce the thiazole phosphate moiety of thiamine. Sulfur is provided by the thiocarboxylate moiety of the carrier protein ThiS. In vitro, sulfur can be provided by H(2)S. The chain is Thiazole synthase from Photobacterium profundum (strain SS9).